Here is a 155-residue protein sequence, read N- to C-terminus: Anaerobic ribonucleoside-triphosphate reductase-activating protein (155 aa).

Cys26, Cys30, and Cys33 together coordinate [4Fe-4S] cluster. Residues 32 to 34 (GCY) and Gly74 each bind S-adenosyl-L-methionine.

This sequence belongs to the organic radical-activating enzymes family. Forms a tetramer composed of two NrdD and two NrdG subunits. [4Fe-4S] cluster serves as cofactor.

The protein localises to the cytoplasm. It catalyses the reaction glycyl-[protein] + reduced [flavodoxin] + S-adenosyl-L-methionine = glycin-2-yl radical-[protein] + semiquinone [flavodoxin] + 5'-deoxyadenosine + L-methionine + H(+). Functionally, activation of anaerobic ribonucleoside-triphosphate reductase under anaerobic conditions by generation of an organic free radical, using S-adenosylmethionine and reduced flavodoxin as cosubstrates to produce 5'-deoxy-adenosine. The protein is Anaerobic ribonucleoside-triphosphate reductase-activating protein (nrdG) of Haemophilus influenzae (strain ATCC 51907 / DSM 11121 / KW20 / Rd).